Here is a 518-residue protein sequence, read N- to C-terminus: Retinal dehydrogenase 2 (518 aa).

Tyrosine 168 is subject to Phosphotyrosine. Residues 184-186 (IPW), 210-213 (KPAE), and 264-266 (STE) contribute to the NAD(+) site. Glutamate 286 (proton acceptor) is an active-site residue. The active-site Nucleophile is cysteine 320. Serine 351 bears the Phosphoserine mark. NAD(+) is bound by residues 366–370 (KQYNK) and glutamate 417.

The protein belongs to the aldehyde dehydrogenase family. In terms of assembly, homotetramer.

The protein localises to the cytoplasm. It carries out the reaction retinal + NAD(+) + H2O = retinoate + NADH + 2 H(+). The catalysed reaction is all-trans-retinal + NAD(+) + H2O = all-trans-retinoate + NADH + 2 H(+). It catalyses the reaction all-trans-13,14-dihydroretinal + NAD(+) + H2O = all-trans-13,14-dihydroretinoate + NADH + 2 H(+). It functions in the pathway cofactor metabolism; retinol metabolism. Functionally, catalyzes the NAD-dependent oxidation of aldehyde substrates, such as all-trans-retinal and all-trans-13,14-dihydroretinal, to their corresponding carboxylic acids, all-trans-retinoate and all-trans-13,14-dihydroretinoate, respectively. Retinoate signaling is critical for the transcriptional control of many genes, for instance it is crucial for initiation of meiosis in both male and female. Recognizes retinal as substrate, both in its free form and when bound to cellular retinol-binding protein. Can metabolize octanal and decanal, but has only very low activity with benzaldehyde, acetaldehyde and propanal. Displays complete lack of activity with citral. The polypeptide is Retinal dehydrogenase 2 (ALDH1A2) (Homo sapiens (Human)).